Here is a 231-residue protein sequence, read N- to C-terminus: MQDEERYMTLNVQSKKRSSAQTSQLTFKDYSVTLHWYKILLGISGTVNGILTLTLISLILLVSQGVLLKCQKGSCSNATQYEDTGDLKVNNGTRRNISNKDLCASRSADQTVLCQSEWLKYQGKCYWFSNEMKSWSDSYVYCLERKSHLLIIHDQLEMAFIQKNLRQLNYVWIGLNFTSLKMTWTWVDGSPIDSKIFFIKGPAKENSCAAIKESKIFSETCSSVFKWICQY.

Topologically, residues 1-38 (MQDEERYMTLNVQSKKRSSAQTSQLTFKDYSVTLHWYK) are cytoplasmic. The residue at position 7 (tyrosine 7) is a Phosphotyrosine. The helical; Signal-anchor for type II membrane protein transmembrane segment at 39-59 (ILLGISGTVNGILTLTLISLI) threads the bilayer. The Extracellular segment spans residues 60 to 231 (LLVSQGVLLK…SSVFKWICQY (172 aa)). N-linked (GlcNAc...) asparagine glycosylation is found at asparagine 77, asparagine 91, asparagine 96, and asparagine 176. A C-type lectin domain is found at 121–230 (YQGKCYWFSN…CSSVFKWICQ (110 aa)). Disulfide bonds link cysteine 142–cysteine 229 and cysteine 208–cysteine 221.

As to quaternary structure, homodimer. Interacts with CLEC2B. Post-translationally, phosphorylated on Tyr-7; this phosphorylation is required for NKp80/KLRF1-mediated cytotoxicity. As to expression, strongly expressed in peripheral blood leukocytes and spleen, with weaker expression in lymph node and adult liver, and no expression detected in bone marrow, thymus, and fetal liver. Not expressed in brain, heart, placenta, lung, kidney, skeletal muscle, and pancreas. Within peripheral blood leukocyte and immunocyte cell lines, expression was predominant in NK cells but was also detected in monocytes.

The protein localises to the membrane. Functions as an activating receptor involved in immunosurveillance upon binding to various ligands displayed at the surface of myeloid cells. Upon interaction with CLEC2B ligand, stimulates NK-cell cytotoxicity and cytokine production leading to the cytolysis of malignant CLEC2B-expressing myeloid cells. Actviation of the common cytotoxicity pathway involves SRC and SYK kinases. This is Killer cell lectin-like receptor subfamily F member 1 (KLRF1) from Homo sapiens (Human).